The chain runs to 205 residues: Protein phosphatase inhibitor 2 family member C (205 aa).

Disordered regions lie at residues 1 to 51 (MSAS…DESS) and 70 to 114 (EPGT…DHSC). The interval 12-17 (KGILKN) is required for binding PPP1CC. Positions 19–34 (SSSGSSVATSGQQSGG) are enriched in low complexity. The required for binding PPP1CC stretch occupies residues 43–55 (KSQKWDESSILAT). Basic and acidic residues predominate over residues 84–102 (DSVRDVEGEDSVRGVEGKE). Positions 147-150 (HYNE) are required for binding PPP1CC catalytic center, displacing metal ions and inhibition of PPP1CC catalytic activity. Positions 165-205 (LQSEDDENEERPQATNEEKTAAEESEEAPLSGGLQTQSCDP) are disordered. The span at 174–186 (ERPQATNEEKTAA) shows a compositional bias: basic and acidic residues.

It belongs to the protein phosphatase inhibitor 2 family.

In terms of biological role, functions as a protein phosphatase inhibitor. It inhibits activity of the catalytic subunit of PP1 and weakly inhibits the activity of myosin-associated phosphates. This Macaca fascicularis (Crab-eating macaque) protein is Protein phosphatase inhibitor 2 family member C (PPP1R2C).